We begin with the raw amino-acid sequence, 159 residues long: MALVRVSCMLALLLIAGQGQAAPVKTEGSTLGLLGGGFGGSVGLSAGIGVGGGLYSGFGGGGYPGGYASGYPGGYGGGYSGYNGYGGSGFGGGYYPGGGYSGFGHRPHHHGGYYPGGGSYHNQGGSYGGHYSQSQYSNGYYGGGGYGGGGYGGNGFFGK.

An N-terminal signal peptide occupies residues 1 to 21; the sequence is MALVRVSCMLALLLIAGQGQA.

Larval (posterior) and imaginal (anterior) epidermis.

In terms of biological role, component of the pupal cuticle. This is Pupal cuticle protein Edg-91 (Edg91) from Drosophila melanogaster (Fruit fly).